Consider the following 109-residue polypeptide: U4-lycotoxin-Ls1c (109 aa).

The N-terminal stretch at 1 to 22 (MKVLVLFSVLFLTLFSYSSTEA) is a signal peptide. Residues 23 to 44 (IDEFDSDAEDDMLSLMANEQVR) constitute a propeptide that is removed on maturation. Residues 45-88 (AKACTPRLHDCSHDRHSCCRGELFKDVCYCFYPEGEDITEVCSC) are knottin domain. 4 disulfides stabilise this stretch: C48/C63, C55/C72, C62/C88, and C74/C86. The segment at 89–108 (QQPKSHKYIEKVVDKAKTVV) is linear cationic cytotoxin domain.

Belongs to the neurotoxin 19 (CSTX) family. 05 (U4-Lctx) subfamily. As to expression, expressed by the venom gland.

It is found in the secreted. Enhances the high-affinity desensitization of human P2RX3 purinoceptors. The polypeptide is U4-lycotoxin-Ls1c (Lycosa singoriensis (Wolf spider)).